Here is a 457-residue protein sequence, read N- to C-terminus: Acetylcholine receptor subunit alpha-1-A (457 aa).

Residues 1-20 (MDFVLTRLILLFLAATIIYS) form the signal peptide. Residues 21–230 (SEDESRLIND…ITYHFLLQRL (210 aa)) lie on the Extracellular side of the membrane. Cystine bridges form between Cys148–Cys162 and Cys212–Cys213. Asn161 is a glycosylation site (N-linked (GlcNAc...) asparagine). The next 3 membrane-spanning stretches (helical) occupy residues 231-255 (PLYFIVNVVIPCLLFSFLTGLVFYL), 263-281 (ITLSVSVLLSLVVFLLVIV), and 297-316 (YMLFTMVFVIASIVITVIVI). At 317–428 (NTHHRSPSTH…WKFVAMVLDH (112 aa)) the chain is on the cytoplasmic side. A helical transmembrane segment spans residues 429-447 (LLLAVFMIVCIIGTLAIFA).

Belongs to the ligand-gated ion channel (TC 1.A.9) family. Acetylcholine receptor (TC 1.A.9.1) subfamily. Alpha-1/CHRNA1 sub-subfamily. One of the alpha chains that assemble within the acetylcholine receptor, a pentamer of two alpha chains, a beta, a delta, and a gamma or epsilon chains. In terms of tissue distribution, oocytes.

The protein resides in the postsynaptic cell membrane. It localises to the cell membrane. The catalysed reaction is K(+)(in) = K(+)(out). It catalyses the reaction Na(+)(in) = Na(+)(out). Functionally, upon acetylcholine binding, the AChR responds by an extensive change in conformation that affects all subunits and leads to opening of an ion-conducting channel across the plasma membrane. This chain is Acetylcholine receptor subunit alpha-1-A (chrna1-a), found in Xenopus laevis (African clawed frog).